The chain runs to 649 residues: uncharacterized protein (649 aa).

It is found in the nucleus. The protein localises to the cytoplasm. This is an uncharacterized protein from Schizosaccharomyces pombe (strain 972 / ATCC 24843) (Fission yeast).